The primary structure comprises 267 residues: Indole-3-glycerol phosphate synthase (267 aa).

It belongs to the TrpC family.

It catalyses the reaction 1-(2-carboxyphenylamino)-1-deoxy-D-ribulose 5-phosphate + H(+) = (1S,2R)-1-C-(indol-3-yl)glycerol 3-phosphate + CO2 + H2O. It participates in amino-acid biosynthesis; L-tryptophan biosynthesis; L-tryptophan from chorismate: step 4/5. This chain is Indole-3-glycerol phosphate synthase, found in Polynucleobacter necessarius subsp. necessarius (strain STIR1).